Here is a 975-residue protein sequence, read N- to C-terminus: Ionotropic receptor 21a (975 aa).

A signal peptide spans 1 to 21; that stretch reads MFKRIVLAVINLVFLIVSTTA. N-linked (GlcNAc...) asparagine glycosylation is found at Asn-67, Asn-177, and Asn-355. A helical transmembrane segment spans residues 433 to 453; it reads WPVWVAVILIYLLAIFPLAFS. An N-linked (GlcNAc...) asparagine glycan is attached at Asn-464. Residues 505 to 525 form a helical membrane-spanning segment; sequence IYWVFTIIITACYTGSIIAFI. Residues Asn-561, Asn-586, and Asn-611 are each glycosylated (N-linked (GlcNAc...) asparagine). Residues 708 to 728 traverse the membrane as a helical segment; sequence MFLLMLFGYVVALGVLISEWV. Disordered stretches follow at residues 757-839 and 911-938; these read ATAG…HSLS and SPHSARADESSDAGGLVRRGAGRERKEM. Polar residues-rich tracts occupy residues 760–777 and 788–800; these read GSDNGSLPVSSPTSTNRN and VENSLPASGNGSA. 2 N-linked (GlcNAc...) asparagine glycosylation sites follow: Asn-763 and Asn-797.

This sequence belongs to the glutamate-gated ion channel (TC 1.A.10.1) family. In both female and male antenna, expressed specifically in 3 sensory neurons of flagellomere 13 segment (at protein level).

The protein localises to the cell projection. It is found in the cilium membrane. Its function is as follows. Integral part of a neural sensory system in the antenna that provides the neural basis for the response to environmental changes in temperature (thermosensation). Specifically, required for thermosensing by the cooling cell. Plays a role in heat seeking and heat-stimulated blood feeding behavior. In Anopheles gambiae (African malaria mosquito), this protein is Ionotropic receptor 21a.